We begin with the raw amino-acid sequence, 214 residues long: External core antigen (214 aa).

The signal sequence occupies residues 1 to 19; that stretch reads MQLFHLCLIISCTCPTVQA. An HBEAG region spans residues 25 to 27; the sequence is GWL. The tract at residues 165–214 is disordered; it reads NAPILSTLPETTVVRRRDRGRSPRRRTPSPRRRRSQSPRRRRSQSRESQC. The span at 178–207 shows a compositional bias: basic residues; sequence VRRRDRGRSPRRRTPSPRRRRSQSPRRRRS. One copy of the 1; half-length repeat lies at 186-192; that stretch reads SPRRRTP. The segment at 186–208 is 3 X 8 AA repeats of S-P-R-R-R-R-S-Q; the sequence is SPRRRTPSPRRRRSQSPRRRRSQ. Positions 186–214 are excised as a propeptide; that stretch reads SPRRRTPSPRRRRSQSPRRRRSQSRESQC. 2 consecutive repeat copies span residues 193–200 and 201–208.

It belongs to the orthohepadnavirus precore antigen family. As to quaternary structure, homodimerizes. In terms of processing, phosphorylated. Cleaved by host furin.

Its subcellular location is the secreted. The protein resides in the host nucleus. Functionally, may regulate immune response to the intracellular capsid in acting as a T-cell tolerogen, by having an immunoregulatory effect which prevents destruction of infected cells by cytotoxic T-cells. This immune regulation may predispose to chronicity during perinatal infections and prevent severe liver injury during adult infections. The polypeptide is External core antigen (Homo sapiens (Human)).